A 138-amino-acid polypeptide reads, in one-letter code: Basic phospholipase A2 chain HDP-2P (138 aa).

The N-terminal stretch at 1 to 16 is a signal peptide; that stretch reads MRILWIVAVCLIGVEG. 7 disulfide bridges follow: cysteine 42–cysteine 131, cysteine 44–cysteine 60, cysteine 59–cysteine 111, cysteine 65–cysteine 138, cysteine 66–cysteine 104, cysteine 73–cysteine 97, and cysteine 91–cysteine 102. Ca(2+) is bound by residues tyrosine 43, glycine 45, and glycine 47. Residue histidine 63 is part of the active site. Aspartate 64 lines the Ca(2+) pocket. Aspartate 105 is an active-site residue.

In terms of assembly, heterodimer of an acidic and a basic chain; non-covalently linked. The toxic basic protein has phospholipase A2 activity (chain HDP-2P) and the non-toxic acidic protein functions as its inhibitor (chain HPD-1I (AC A4VBF0)). Ca(2+) is required as a cofactor. As to expression, expressed by the venom gland.

It localises to the secreted. It catalyses the reaction a 1,2-diacyl-sn-glycero-3-phosphocholine + H2O = a 1-acyl-sn-glycero-3-phosphocholine + a fatty acid + H(+). Enzymatic activity and neurotoxicity are inhibited by Triton X-100. Triton X-100 has been determined to be located in the center of the hydrophobic channel of the enzyme. In terms of biological role, monomer: snake venom phospholipase A2 (PLA2) that affects neuromuscular transmission presynaptically. It has catalytic activity, anticoagulant activity and weakly inhibits ADP-induced platelet aggregation. PLA2 catalyzes the calcium-dependent hydrolysis of the 2-acyl groups in 3-sn-phosphoglycerides. Heterodimer: shows the same activities as the monomer, but with a lower potency. This chain is Basic phospholipase A2 chain HDP-2P, found in Vipera nikolskii (Nikolsky's adder).